A 933-amino-acid polypeptide reads, in one-letter code: Bromodomain testis-specific protein (933 aa).

Residues 1-21 (MSMSSRHLHSSIVNPPPPEYI) form a disordered region. In terms of domain architecture, Bromo 1 spans 28 to 134 (RLTNQLQYLE…KVFMEKIAEM (107 aa)). The Nuclear localization signal motif lies at 214–225 (KGIKRKADTTTP). The segment at 235 to 263 (ESSPTLSEPKPNKILSGTEKTRSAETSAV) is disordered. The Bromo 2 domain maps to 278–385 (NQICEQLKHC…DVFEGMFAKI (108 aa)). Disordered stretches follow at residues 398–425 (RYKT…DERA), 576–610 (KPSS…QLSS), and 627–662 (GGPS…ESAT). Residues 404 to 418 (EESSSSSSSEQSSSS) show a composition bias toward low complexity. Residues 423-448 (ERAQHLALLQEQLRAVQEQLKALTET) adopt a coiled-coil conformation. Residues 495–577 (VSDEEEDVKP…VCLRKRPKKP (83 aa)) enclose the NET domain. Residues 584–603 (KSKEQLNKEKKQELEKRLRD) show a composition bias toward basic and acidic residues. A compositionally biased stretch (low complexity) spans 630 to 660 (SRLSESSTSSSASDVSNSSDSSSSDSSDSES). The stretch at 829–917 (AKEERERALK…RREAMAGTID (89 aa)) forms a coiled coil.

The protein belongs to the BET family.

It is found in the nucleus. In terms of biological role, testis-specific chromatin protein that specifically binds histone H4 acetylated at 'Lys-5' and 'Lys-8' (H4K5ac and H4K8ac, respectively) and plays a key role in spermatogenesis. Required in late pachytene spermatocytes: plays a role in meiotic and post-meiotic cells by binding to acetylated histones at the promoter of specific meiotic and post-meiotic genes, facilitating their activation at the appropriate time. In the post-meiotic phase of spermatogenesis, binds to hyperacetylated histones and participates in their general removal from DNA. Also recognizes and binds a subset of butyrylated histones: able to bind histone H4 butyrylated at 'Lys-8' (H4K8ac), while it is not able to bind H4 butyrylated at 'Lys-5' (H4K5ac). This Xenopus tropicalis (Western clawed frog) protein is Bromodomain testis-specific protein (brdt).